The chain runs to 84 residues: SPbeta prophage-derived uncharacterized protein YomY (84 aa).

In Bacillus subtilis (strain 168), this protein is SPbeta prophage-derived uncharacterized protein YomY (yomY).